A 231-amino-acid chain; its full sequence is Ferredoxin-type protein NapG (231 aa).

The tat-type signal signal peptide spans 1-41 (MSRSAKPQNGRRRFLRDVVRTAGGLAAVGVALGLQQQTARA). 4 consecutive 4Fe-4S ferredoxin-type domains span residues 50–81 (GAINENAFASACVRCGQCVQACPYDTLKLATL), 89–121 (TPYFVARDIPCEMCEDIPCAKVCPSGALDREIE), 130–166 (LAVLVDQENCLNFQGLRCDVCYRECPKIDEAITLELE), and 177–208 (FLPTVHSDACTGCGKCEKVCVLEQPAIKVLPL). [4Fe-4S] cluster contacts are provided by Cys-61, Cys-64, Cys-67, Cys-71, Cys-99, Cys-102, Cys-107, Cys-111, Cys-139, Cys-147, Cys-150, Cys-154, Cys-186, Cys-189, Cys-192, and Cys-196.

The cofactor is [4Fe-4S] cluster. Post-translationally, exported by the Tat system. The position of the signal peptide cleavage has not been experimentally proven.

Its subcellular location is the periplasm. Required for electron transfer from ubiquinol, via NapC, to the periplasmic nitrate reductase NapAB complex. The protein is Ferredoxin-type protein NapG (napG) of Escherichia coli (strain K12).